Consider the following 251-residue polypeptide: Probable transcriptional regulatory protein Pmob_0807 (251 aa).

The disordered stretch occupies residues 1–22 (MSGHNKWANIKHRKGAQDAKRS).

The protein belongs to the TACO1 family.

It localises to the cytoplasm. The sequence is that of Probable transcriptional regulatory protein Pmob_0807 from Petrotoga mobilis (strain DSM 10674 / SJ95).